Consider the following 54-residue polypeptide: UPF0391 membrane protein Reut_A0124 (54 aa).

2 helical membrane passes run 5–25 and 30–50; these read ALVFFVIALIAAVFGFGGIAA and IAKILFFIFLIVALVTAVMGL.

This sequence belongs to the UPF0391 family.

It localises to the cell membrane. The protein is UPF0391 membrane protein Reut_A0124 of Cupriavidus pinatubonensis (strain JMP 134 / LMG 1197) (Cupriavidus necator (strain JMP 134)).